A 604-amino-acid polypeptide reads, in one-letter code: Aspartate--tRNA(Asp/Asn) ligase (604 aa).

E175 provides a ligand contact to L-aspartate. Positions Q199 to K202 are aspartate. Residues R221 and H456 each coordinate L-aspartate. Position 221–223 (R221–E223) interacts with ATP. Residue E496 participates in ATP binding. R503 is an L-aspartate binding site. G548–R551 contributes to the ATP binding site.

This sequence belongs to the class-II aminoacyl-tRNA synthetase family. Type 1 subfamily. As to quaternary structure, homodimer.

It localises to the cytoplasm. The enzyme catalyses tRNA(Asx) + L-aspartate + ATP = L-aspartyl-tRNA(Asx) + AMP + diphosphate. In terms of biological role, aspartyl-tRNA synthetase with relaxed tRNA specificity since it is able to aspartylate not only its cognate tRNA(Asp) but also tRNA(Asn). Reaction proceeds in two steps: L-aspartate is first activated by ATP to form Asp-AMP and then transferred to the acceptor end of tRNA(Asp/Asn). This Methylobacterium nodulans (strain LMG 21967 / CNCM I-2342 / ORS 2060) protein is Aspartate--tRNA(Asp/Asn) ligase.